Consider the following 228-residue polypeptide: NOI-like protein (228 aa).

Residues 56 to 75 (AQDHQHSEKHHNDTSTDYHV) show a composition bias toward basic and acidic residues. 2 disordered regions span residues 56–87 (AQDH…HRRE) and 99–133 (RPHR…RNSD). The span at 76 to 86 (VKQHRRKHHRR) shows a compositional bias: basic residues. The segment covering 118–133 (HGTSATMSSSVKRNSD) has biased composition (polar residues).

It belongs to the RIN4 family.

In Elaeis oleifera (American oil palm), this protein is NOI-like protein.